A 396-amino-acid polypeptide reads, in one-letter code: Tryptophan synthase beta chain (396 aa).

K86 is subject to N6-(pyridoxal phosphate)lysine.

The protein belongs to the TrpB family. Tetramer of two alpha and two beta chains. The cofactor is pyridoxal 5'-phosphate.

The catalysed reaction is (1S,2R)-1-C-(indol-3-yl)glycerol 3-phosphate + L-serine = D-glyceraldehyde 3-phosphate + L-tryptophan + H2O. It functions in the pathway amino-acid biosynthesis; L-tryptophan biosynthesis; L-tryptophan from chorismate: step 5/5. Its function is as follows. The beta subunit is responsible for the synthesis of L-tryptophan from indole and L-serine. In Vibrio vulnificus (strain CMCP6), this protein is Tryptophan synthase beta chain.